The sequence spans 96 residues: Muconolactone Delta-isomerase 1 (96 aa).

It belongs to the muconolactone Delta-isomerase family. Homodecamer.

The catalysed reaction is (S)-muconolactone = (4,5-dihydro-5-oxofuran-2-yl)-acetate. The protein operates within aromatic compound metabolism; beta-ketoadipate pathway; 5-oxo-4,5-dihydro-2-furylacetate from catechol: step 3/3. The polypeptide is Muconolactone Delta-isomerase 1 (catC1) (Acinetobacter lwoffii).